A 198-amino-acid chain; its full sequence is tRNA (pseudouridine(54)-N(1))-methyltransferase (198 aa).

Residues L130, G153, 176-181 (LSPLEL), and C186 contribute to the S-adenosyl-L-methionine site.

It belongs to the methyltransferase superfamily. TrmY family. In terms of assembly, homodimer.

The protein resides in the cytoplasm. The catalysed reaction is pseudouridine(54) in tRNA + S-adenosyl-L-methionine = N(1)-methylpseudouridine(54) in tRNA + S-adenosyl-L-homocysteine + H(+). Functionally, specifically catalyzes the N1-methylation of pseudouridine at position 54 (Psi54) in tRNAs. The sequence is that of tRNA (pseudouridine(54)-N(1))-methyltransferase from Methanococcus maripaludis (strain C5 / ATCC BAA-1333).